The chain runs to 194 residues: BCL2/adenovirus E1B 19 kDa protein-interacting protein 3 (194 aa).

Positions 1–102 (MSQNGAPGMQ…SQSEEDDIER (102 aa)) are disordered. The span at 42 to 55 (DMEKILLDAQHESG) shows a compositional bias: basic and acidic residues. Phosphoserine is present on residues Ser-54, Ser-66, Ser-86, Ser-92, and Ser-95. Residues 56–69 (RSSSKSSHCDSPPR) show a composition bias toward low complexity. A compositionally biased stretch (basic and acidic residues) spans 78–88 (RASETDTHSIG). Positions 100 to 125 (IERRKEVESILKKNSDWIWDWSSRPE) match the BH3 motif. A helical transmembrane segment spans residues 164–184 (VFLPSLLLSHLLAIGLGIYIG).

It belongs to the NIP3 family. As to quaternary structure, homodimer. Binds to BCL2. Interacts with BNIP3L and ACAA2. Interacts (via BH3 domain) with SPATA18 (via coiled-coil domains). Interacts with BOK; promotes BOK oligomerization. Interacts with PPTC7; this interaction promotes BNIP3 degradation. (Microbial infection) Interacts with adenovirus E1B 19 kDa protein. In terms of assembly, (Microbial infection) Interacts with Epstein-Barr virus BHRF1.

The protein resides in the mitochondrion. It is found in the mitochondrion outer membrane. Functionally, apoptosis-inducing protein that can overcome BCL2 suppression. May play a role in repartitioning calcium between the two major intracellular calcium stores in association with BCL2. Involved in mitochondrial quality control via its interaction with SPATA18/MIEAP: in response to mitochondrial damage, participates in mitochondrial protein catabolic process (also named MALM) leading to the degradation of damaged proteins inside mitochondria. The physical interaction of SPATA18/MIEAP, BNIP3 and BNIP3L/NIX at the mitochondrial outer membrane regulates the opening of a pore in the mitochondrial double membrane in order to mediate the translocation of lysosomal proteins from the cytoplasm to the mitochondrial matrix. Plays an important role in the calprotectin (S100A8/A9)-induced cell death pathway. The polypeptide is BCL2/adenovirus E1B 19 kDa protein-interacting protein 3 (Homo sapiens (Human)).